Consider the following 483-residue polypeptide: MDQMAKIDEKKPHVVFIPFPAQSHIKCMLKLARILHQKGLYITFINTDTNHERLVASGGTQWLENAPGFWFKTVPDGFGSAKDDGVKPTDALRELMDYLKTNFFDLFLDLVLKLEVPATCIICDGCMTFANTIRAAEKLNIPVILFWTMAACGFMAFYQAKVLKEKEIVPVKDETYLTNGYLDMEIDWIPGMKRIRLRDLPEFILATKQNYFAFEFLFETAQLADKVSHMIIHTFEELEASLVSEIKSIFPNVYTIGPLQLLLNKITQKETNNDSYSLWKEEPECVEWLNSKEPNSVVYVNFGSLAVMSLQDLVEFGWGLVNSNHYFLWIIRANLIDGKPAVMPQELKEAMNEKGFVGSWCSQEEVLNHPAVGGFLTHCGWGSIIESLSAGVPMLGWPSIGDQRANCRQMCKEWEVGMEIGKNVKRDEVEKLVRMLMEGLEGERMRKKALEWKKSATLATCCNGSSSLDVEKLANEIKKLSRN.

UDP-alpha-D-glucose-binding positions include S304, 360 to 361, 378 to 386, and 400 to 403; these read WC, HCGWGSIIE, and IGDQ.

Belongs to the UDP-glycosyltransferase family.

May glycosylate diterpenes or flavonols in leaves. This chain is UDP-glycosyltransferase 85C1, found in Stevia rebaudiana (Stevia).